A 100-amino-acid polypeptide reads, in one-letter code: Urease subunit gamma (100 aa).

This sequence belongs to the urease gamma subunit family. As to quaternary structure, heterotrimer of UreA (gamma), UreB (beta) and UreC (alpha) subunits. Three heterotrimers associate to form the active enzyme.

Its subcellular location is the cytoplasm. It catalyses the reaction urea + 2 H2O + H(+) = hydrogencarbonate + 2 NH4(+). It participates in nitrogen metabolism; urea degradation; CO(2) and NH(3) from urea (urease route): step 1/1. The sequence is that of Urease subunit gamma from Nostoc punctiforme (strain ATCC 29133 / PCC 73102).